The primary structure comprises 273 residues: Undecaprenyl-diphosphatase (273 aa).

A run of 8 helical transmembrane segments spans residues 4–24 (IELL…WLPI), 45–65 (FMSM…VVLF), 84–104 (TFTL…MIPF), 112–132 (FFNP…FIII), 149–169 (ITYQ…IPGT), 187–207 (YVAA…ASLL), 219–239 (AEIV…IIVI), and 251–271 (FKVF…YFLL).

Belongs to the UppP family.

It localises to the cell membrane. The catalysed reaction is di-trans,octa-cis-undecaprenyl diphosphate + H2O = di-trans,octa-cis-undecaprenyl phosphate + phosphate + H(+). In terms of biological role, catalyzes the dephosphorylation of undecaprenyl diphosphate (UPP). Confers resistance to bacitracin. The protein is Undecaprenyl-diphosphatase of Lachnoclostridium phytofermentans (strain ATCC 700394 / DSM 18823 / ISDg) (Clostridium phytofermentans).